Consider the following 236-residue polypeptide: Ribonuclease HIII (236 aa).

In terms of domain architecture, RNase H type-2 spans 9 to 236; that stretch reads LYLIGSDESG…NVASFLKQLA (228 aa). A divalent metal cation contacts are provided by aspartate 15, glutamate 16, and aspartate 122.

It belongs to the RNase HII family. RnhC subfamily. The cofactor is a divalent metal cation.

It is found in the cytoplasm. It catalyses the reaction Endonucleolytic cleavage to 5'-phosphomonoester.. Its function is as follows. Endonuclease that specifically degrades the RNA of RNA-DNA hybrids. The chain is Ribonuclease HIII (rnhC) from Mycoplasma pneumoniae (strain ATCC 29342 / M129 / Subtype 1) (Mycoplasmoides pneumoniae).